The primary structure comprises 144 residues: Large ribosomal subunit protein uL13 (144 aa).

It belongs to the universal ribosomal protein uL13 family. Part of the 50S ribosomal subunit.

In terms of biological role, this protein is one of the early assembly proteins of the 50S ribosomal subunit, although it is not seen to bind rRNA by itself. It is important during the early stages of 50S assembly. The protein is Large ribosomal subunit protein uL13 of Lawsonia intracellularis (strain PHE/MN1-00).